Consider the following 286-residue polypeptide: 4-diphosphocytidyl-2-C-methyl-D-erythritol kinase (286 aa).

Lysine 11 is a catalytic residue. Residue 94–104 coordinates ATP; the sequence is PMGGGIGGGSS. Aspartate 136 is a catalytic residue.

It belongs to the GHMP kinase family. IspE subfamily.

The enzyme catalyses 4-CDP-2-C-methyl-D-erythritol + ATP = 4-CDP-2-C-methyl-D-erythritol 2-phosphate + ADP + H(+). Its pathway is isoprenoid biosynthesis; isopentenyl diphosphate biosynthesis via DXP pathway; isopentenyl diphosphate from 1-deoxy-D-xylulose 5-phosphate: step 3/6. Its function is as follows. Catalyzes the phosphorylation of the position 2 hydroxy group of 4-diphosphocytidyl-2C-methyl-D-erythritol. This Pseudomonas entomophila (strain L48) protein is 4-diphosphocytidyl-2-C-methyl-D-erythritol kinase.